The following is a 482-amino-acid chain: ATP-dependent rRNA helicase rrp3 (482 aa).

A disordered region spans residues 1–55 (MSSVKRRKTEKNTSSGLKSKQAKEPKEASPLSSPEPTEENQNNEIEEGTEEEEVT). Residues 44-53 (EIEEGTEEEE) are compositionally biased toward acidic residues. Residues 56–84 (KSFKDLGIVDSLCEACDTLGYKAPTPIQR) carry the Q motif motif. Residues 87–258 (IPLALQGRDL…RASLKDPLRV (172 aa)) enclose the Helicase ATP-binding domain. 100 to 107 (AETGSGKT) is a binding site for ATP. The short motif at 206–209 (DEAD) is the DEAD box element. The Helicase C-terminal domain occupies 282-430 (HKDTYLIYLL…EYQTVKDEVM (149 aa)). Composition is skewed to basic and acidic residues over residues 444–456 (RNEM…DRGK) and 472–482 (RGRDEMDREEG). The segment at 444-482 (RNEMKNLHEDRGKKGAVLKGRRPANGAKRGRDEMDREEG) is disordered.

Belongs to the DEAD box helicase family. DDX47/RRP3 subfamily. As to quaternary structure, interacts with the SSU processome.

The protein resides in the nucleus. It carries out the reaction ATP + H2O = ADP + phosphate + H(+). In terms of biological role, ATP-dependent rRNA helicase required for pre-ribosomal RNA processing. Involved in the maturation of the 35S-pre-rRNA and to its cleavage to mature 18S rRNA. The polypeptide is ATP-dependent rRNA helicase rrp3 (Sclerotinia sclerotiorum (strain ATCC 18683 / 1980 / Ss-1) (White mold)).